The chain runs to 302 residues: Small ribosomal subunit biogenesis GTPase RsgA (302 aa).

One can recognise a CP-type G domain in the interval 69-229 (KNLLIRPKVA…VGDTPGFSKV (161 aa)). Residues 118–121 (NKID) and 172–180 (GPSGVGKSS) contribute to the GTP site. Cysteine 252, cysteine 257, histidine 259, and cysteine 265 together coordinate Zn(2+).

The protein belongs to the TRAFAC class YlqF/YawG GTPase family. RsgA subfamily. Monomer. Associates with 30S ribosomal subunit, binds 16S rRNA. Zn(2+) serves as cofactor.

It localises to the cytoplasm. Functionally, one of several proteins that assist in the late maturation steps of the functional core of the 30S ribosomal subunit. Helps release RbfA from mature subunits. May play a role in the assembly of ribosomal proteins into the subunit. Circularly permuted GTPase that catalyzes slow GTP hydrolysis, GTPase activity is stimulated by the 30S ribosomal subunit. The polypeptide is Small ribosomal subunit biogenesis GTPase RsgA (Aquifex aeolicus (strain VF5)).